We begin with the raw amino-acid sequence, 918 residues long: Pre-pro-metalloprotease PrtV (918 aa).

The N-terminal stretch at M1–A23 is a signal peptide. A propeptide spanning residues Q24 to F105 is cleaved from the precursor. H330 is a binding site for Zn(2+). E331 is an active-site residue. H334 serves as a coordination point for Zn(2+). Residues I757, D782, D821, and D825 each contribute to the Ca(2+) site. PKD domains lie at A758–V835 and V855–L918. Residues V835–L918 constitute a propeptide that is removed on maturation.

It belongs to the peptidase M6 family. Requires Zn(2+) as cofactor. In terms of processing, prtV is expressed as an inactive, multidomain, 102 kDa pre-pro-metalloprotease. To form a catalytically active protease, PrtV is first secreted, and then it undergoes N- and C-terminal cleavages during envelope translocation to yield a 81 kDa pro-metalloprotease. Outside the cell, the 81 kDa pro-metalloprotease undergoes an auto-cleavage. The two major products of autoproteolysis (37 kDa and 18 kDa) together form the so called 55 kDa active complex.

The protein resides in the secreted. With respect to regulation, calcium plays an important structural role, providing stability to this protein in the cytoplasm. Outside the cell, the decrease of the calcium concentration triggers the autoproteolysis. PrtV activity is increased by 25 mM of Sr(2+) or Mg(2+) and to some extent by Ba(2+); however, Ba(2+) inhibits PrtV at higher concentrations. Completely inhibited by EDTA and 1,10-phenanthroline. Functionally, metalloprotease that exhibits a cytotoxic effect leading to cell death. In host tissues, it could play a role in pathogenesis by modulating the stability of the extracellular matrix components such as fibronectin and fibrinogen. Also able to cleave plasminogen. The sequence is that of Pre-pro-metalloprotease PrtV from Vibrio cholerae serotype O1 (strain ATCC 39315 / El Tor Inaba N16961).